Reading from the N-terminus, the 739-residue chain is Gamma-tubulin complex component 4 homolog (739 aa).

The protein belongs to the TUBGCP family.

It localises to the cytoplasm. It is found in the cytoskeleton. Its subcellular location is the microtubule organizing center. Gamma-tubulin complex is necessary for microtubule nucleation at the microtubule organizing centers (MTOCs). This is Gamma-tubulin complex component 4 homolog (85P) from Medicago truncatula (Barrel medic).